We begin with the raw amino-acid sequence, 257 residues long: Imidazole glycerol phosphate synthase subunit HisF (257 aa).

Catalysis depends on residues Asp12 and Asp131.

Belongs to the HisA/HisF family. Heterodimer of HisH and HisF.

It is found in the cytoplasm. The catalysed reaction is 5-[(5-phospho-1-deoxy-D-ribulos-1-ylimino)methylamino]-1-(5-phospho-beta-D-ribosyl)imidazole-4-carboxamide + L-glutamine = D-erythro-1-(imidazol-4-yl)glycerol 3-phosphate + 5-amino-1-(5-phospho-beta-D-ribosyl)imidazole-4-carboxamide + L-glutamate + H(+). Its pathway is amino-acid biosynthesis; L-histidine biosynthesis; L-histidine from 5-phospho-alpha-D-ribose 1-diphosphate: step 5/9. IGPS catalyzes the conversion of PRFAR and glutamine to IGP, AICAR and glutamate. The HisF subunit catalyzes the cyclization activity that produces IGP and AICAR from PRFAR using the ammonia provided by the HisH subunit. The sequence is that of Imidazole glycerol phosphate synthase subunit HisF from Rhodococcus erythropolis (strain PR4 / NBRC 100887).